The sequence spans 363 residues: Fructose-1,6-bisphosphate aldolase/phosphatase (363 aa).

The active-site Proton acceptor; for FBP phosphatase activity is Asp11. Residues Asp11, His18, Asp51, and Asp52 each contribute to the Mg(2+) site. Residue His18 participates in beta-D-fructose 1,6-bisphosphate binding. Position 18 (His18) interacts with dihydroxyacetone phosphate. Tyr89 is a binding site for beta-D-fructose 1,6-bisphosphate. Gln93 contacts Mg(2+). Position 102 to 103 (102 to 103 (GN)) interacts with beta-D-fructose 1,6-bisphosphate. Asp130 provides a ligand contact to Mg(2+). Position 131 (Lys131) interacts with beta-D-fructose 1,6-bisphosphate. Lys131 serves as a coordination point for dihydroxyacetone phosphate. The active-site Proton donor/acceptor; for FBP aldolase activity is the Tyr230. Mg(2+) is bound by residues Lys233, Asp234, and Asp235. The active-site Schiff-base intermediate with DHAP; for FBP aldolase activity is Lys233. Residues 243 to 244 (QK), Arg267, and Tyr348 contribute to the beta-D-fructose 1,6-bisphosphate site. Arg267 contributes to the dihydroxyacetone phosphate binding site.

The protein belongs to the FBP aldolase/phosphatase family. In terms of assembly, homooctamer; dimer of tetramers. Requires Mg(2+) as cofactor.

It carries out the reaction beta-D-fructose 1,6-bisphosphate + H2O = beta-D-fructose 6-phosphate + phosphate. It catalyses the reaction beta-D-fructose 1,6-bisphosphate = D-glyceraldehyde 3-phosphate + dihydroxyacetone phosphate. Its pathway is carbohydrate biosynthesis; gluconeogenesis. Catalyzes two subsequent steps in gluconeogenesis: the aldol condensation of dihydroxyacetone phosphate (DHAP) and glyceraldehyde-3-phosphate (GA3P) to fructose-1,6-bisphosphate (FBP), and the dephosphorylation of FBP to fructose-6-phosphate (F6P). This chain is Fructose-1,6-bisphosphate aldolase/phosphatase, found in Thermus thermophilus (strain ATCC BAA-163 / DSM 7039 / HB27).